A 229-amino-acid polypeptide reads, in one-letter code: Homeobox-leucine zipper protein HOX3 (229 aa).

The tract at residues 1–82 is disordered; sequence MMGATSPSGL…GPHRPKKLRL (82 aa). Over residues 52 to 68 the composition is skewed to acidic residues; the sequence is GEEEEFPMGSVEEDEEE. Positions 75-134 form a DNA-binding region, homeobox; the sequence is HRPKKLRLSKEQSRLLEESFRLNHTLTPKQKEALAIKLKLRPRQVEVWFQNRRARTKLKQ. The interval 133 to 177 is leucine-zipper; that stretch reads KQTEMECEYLKRCFGSLTEENRRLQREVEELRAMRVAPPTVLSPH. A disordered region spans residues 198-229; the sequence is AATGPPAVRPPPSSAAAAAPSPFHPRRPSAAF.

This sequence belongs to the HD-ZIP homeobox family. Class II subfamily. Homodimer. May form a heterodimer with HOX1, HOX2 or HOX7. Expressed in seedlings, roots, leaves, nodes, internodes, flowers and embryo.

It is found in the nucleus. In terms of biological role, probable transcription repressor that binds to the DNA sequence 5'-CAAT[GC]ATTG-3'. The protein is Homeobox-leucine zipper protein HOX3 (HOX3) of Oryza sativa subsp. indica (Rice).